The primary structure comprises 59 residues: Large ribosomal subunit protein bL32 (59 aa).

The protein belongs to the bacterial ribosomal protein bL32 family.

This is Large ribosomal subunit protein bL32 from Mycoplasma capricolum subsp. capricolum (strain California kid / ATCC 27343 / NCTC 10154).